We begin with the raw amino-acid sequence, 254 residues long: MLLAIDVGNTNTVLGAYEGPSLRQHWRIETSHTRTYDEYGILVRQLFQVAGLDPAAVTAVAVSSVVPPLAFTLEQMSLRYFKVKPLFVGPGVKTGMSILYENPREVGADRVVNAVAAFERWRCGLIVVDFGTATTFDAVSPKGEYLGGAICPGIAISMDALFRHASKLPRVEFQRPPHVIGKNTVASIQSGLVYGYVGLVDGICARMADELGFAPKVVATGGLAALIAGVSKTVSEVDEHLTLDGLRLLHERNR.

Position 6-13 (6-13) interacts with ATP; the sequence is DVGNTNTV. Residues tyrosine 100 and 107 to 110 contribute to the substrate site; that span reads GADR. The active-site Proton acceptor is the aspartate 109. Aspartate 129 provides a ligand contact to K(+). Position 132 (threonine 132) interacts with ATP. Threonine 184 is a binding site for substrate.

The protein belongs to the type III pantothenate kinase family. Homodimer. It depends on NH4(+) as a cofactor. The cofactor is K(+).

The protein resides in the cytoplasm. The enzyme catalyses (R)-pantothenate + ATP = (R)-4'-phosphopantothenate + ADP + H(+). The protein operates within cofactor biosynthesis; coenzyme A biosynthesis; CoA from (R)-pantothenate: step 1/5. Functionally, catalyzes the phosphorylation of pantothenate (Pan), the first step in CoA biosynthesis. This Anaeromyxobacter sp. (strain Fw109-5) protein is Type III pantothenate kinase.